The following is a 212-amino-acid chain: Lipopolysaccharide core heptose(II)-phosphate phosphatase (212 aa).

An N-terminal signal peptide occupies residues 1–32 (MSIGGVYELAFCRSSLKSKKYFIILLALAAIA).

Belongs to the phosphoglycerate mutase family. Ais subfamily.

Its subcellular location is the periplasm. The protein operates within bacterial outer membrane biogenesis; lipopolysaccharide metabolism. Functionally, catalyzes the dephosphorylation of heptose(II) of the outer membrane lipopolysaccharide core. This is Lipopolysaccharide core heptose(II)-phosphate phosphatase from Shigella boydii serotype 4 (strain Sb227).